Here is a 275-residue protein sequence, read N- to C-terminus: Formamidopyrimidine-DNA glycosylase (275 aa).

P2 acts as the Schiff-base intermediate with DNA in catalysis. The active-site Proton donor is E3. K60 (proton donor; for beta-elimination activity) is an active-site residue. The DNA site is built by H93 and R112. Residues 240 to 274 (FVYGRKDEPCKKCGSPIEKTVVGGRGTHFCIKCQK) form an FPG-type zinc finger. The active-site Proton donor; for delta-elimination activity is R264.

It belongs to the FPG family. Monomer. The cofactor is Zn(2+).

It carries out the reaction Hydrolysis of DNA containing ring-opened 7-methylguanine residues, releasing 2,6-diamino-4-hydroxy-5-(N-methyl)formamidopyrimidine.. It catalyses the reaction 2'-deoxyribonucleotide-(2'-deoxyribose 5'-phosphate)-2'-deoxyribonucleotide-DNA = a 3'-end 2'-deoxyribonucleotide-(2,3-dehydro-2,3-deoxyribose 5'-phosphate)-DNA + a 5'-end 5'-phospho-2'-deoxyribonucleoside-DNA + H(+). Functionally, involved in base excision repair of DNA damaged by oxidation or by mutagenic agents. Acts as a DNA glycosylase that recognizes and removes damaged bases. Has a preference for oxidized purines, such as 7,8-dihydro-8-oxoguanine (8-oxoG). Has AP (apurinic/apyrimidinic) lyase activity and introduces nicks in the DNA strand. Cleaves the DNA backbone by beta-delta elimination to generate a single-strand break at the site of the removed base with both 3'- and 5'-phosphates. The sequence is that of Formamidopyrimidine-DNA glycosylase from Bacillus licheniformis (strain ATCC 14580 / DSM 13 / JCM 2505 / CCUG 7422 / NBRC 12200 / NCIMB 9375 / NCTC 10341 / NRRL NRS-1264 / Gibson 46).